We begin with the raw amino-acid sequence, 384 residues long: MSGHLHIGIVVGEASGDILGAALMTELRRHFPNAEFSGIGGPRMLELGFHSYFPQDRLAVMGLIEPLKRLPELLRIRKFLREHFTANPPSVFIGIDSPDFTIPLEGALKEKGIKTVHYVSPSVWAWRQKRIINIARSVDLMLTLLPFEARFYEEHGVPVEFVGHHLADAIPDNVDKTAARQLLGLPGQGRIVALLPGSRSSEVERMAELFFRTAVFCIEQDPSLHFVVPAANSDRYRQLHIELNDFVDFPIHLVNGHSQDAMAAADVLLVASGTVTLEALLLKKPMVVAYKMAPLTYRILSWLVKTPFVSLPNLLAQKMLVPELLQDKATPEALSAAVMNYFENPEQSMAVSQTFADMHRELKCNASARAADAIARLIKPAEAS.

This sequence belongs to the LpxB family.

It catalyses the reaction a lipid X + a UDP-2-N,3-O-bis[(3R)-3-hydroxyacyl]-alpha-D-glucosamine = a lipid A disaccharide + UDP + H(+). Its pathway is bacterial outer membrane biogenesis; LPS lipid A biosynthesis. Functionally, condensation of UDP-2,3-diacylglucosamine and 2,3-diacylglucosamine-1-phosphate to form lipid A disaccharide, a precursor of lipid A, a phosphorylated glycolipid that anchors the lipopolysaccharide to the outer membrane of the cell. The protein is Lipid-A-disaccharide synthase of Cellvibrio japonicus (strain Ueda107) (Pseudomonas fluorescens subsp. cellulosa).